The sequence spans 486 residues: Glutamyl-tRNA(Gln) amidotransferase subunit A (486 aa).

Catalysis depends on charge relay system residues Lys79 and Ser154. Ser178 acts as the Acyl-ester intermediate in catalysis.

This sequence belongs to the amidase family. GatA subfamily. Heterotrimer of A, B and C subunits.

The enzyme catalyses L-glutamyl-tRNA(Gln) + L-glutamine + ATP + H2O = L-glutaminyl-tRNA(Gln) + L-glutamate + ADP + phosphate + H(+). Functionally, allows the formation of correctly charged Gln-tRNA(Gln) through the transamidation of misacylated Glu-tRNA(Gln) in organisms which lack glutaminyl-tRNA synthetase. The reaction takes place in the presence of glutamine and ATP through an activated gamma-phospho-Glu-tRNA(Gln). This is Glutamyl-tRNA(Gln) amidotransferase subunit A from Dehalococcoides mccartyi (strain ATCC BAA-2266 / KCTC 15142 / 195) (Dehalococcoides ethenogenes (strain 195)).